The chain runs to 482 residues: ATP synthase subunit beta (482 aa).

An ATP-binding site is contributed by 161–168 (GGAGVGKT).

This sequence belongs to the ATPase alpha/beta chains family. As to quaternary structure, F-type ATPases have 2 components, CF(1) - the catalytic core - and CF(0) - the membrane proton channel. CF(1) has five subunits: alpha(3), beta(3), gamma(1), delta(1), epsilon(1). CF(0) has four main subunits: a(1), b(1), b'(1) and c(9-12).

Its subcellular location is the cellular thylakoid membrane. It carries out the reaction ATP + H2O + 4 H(+)(in) = ADP + phosphate + 5 H(+)(out). Produces ATP from ADP in the presence of a proton gradient across the membrane. The catalytic sites are hosted primarily by the beta subunits. The polypeptide is ATP synthase subunit beta (Microcystis aeruginosa (strain NIES-843 / IAM M-2473)).